The sequence spans 468 residues: tRNA threonylcarbamoyladenosine dehydratase (468 aa).

The next 3 helical transmembrane spans lie at 15-35, 109-129, and 315-335; these read FWIA…TLEF, NSFV…NMLA, and ILPV…TYVL.

The protein belongs to the HesA/MoeB/ThiF family.

It localises to the mitochondrion outer membrane. Functionally, catalyzes the ATP-dependent dehydration of threonylcarbamoyladenosine at position 37 (t(6)A37) to form cyclic t(6)A37 (ct(6)A37) in tRNAs that read codons beginning with adenine. This Schizosaccharomyces pombe (strain 972 / ATCC 24843) (Fission yeast) protein is tRNA threonylcarbamoyladenosine dehydratase (tcd1).